The following is a 62-amino-acid chain: Inner membrane protein p12 (62 aa).

Residues 16–36 form a helical membrane-spanning segment; that stretch reads LLIVAIVVVIMAIMLYYFWWM.

Belongs to the asfivirus inner membrane protein p12 family. In terms of assembly, homomultimer; disulfide-linked. In terms of processing, not glycosylated.

It is found in the virion membrane. The protein is Inner membrane protein p12 of African swine fever virus (isolate Pig/Kenya/KEN-50/1950) (ASFV).